Here is a 111-residue protein sequence, read N- to C-terminus: Putative pterin-4-alpha-carbinolamine dehydratase (111 aa).

It belongs to the pterin-4-alpha-carbinolamine dehydratase family.

The enzyme catalyses (4aS,6R)-4a-hydroxy-L-erythro-5,6,7,8-tetrahydrobiopterin = (6R)-L-erythro-6,7-dihydrobiopterin + H2O. In Chlorobaculum tepidum (strain ATCC 49652 / DSM 12025 / NBRC 103806 / TLS) (Chlorobium tepidum), this protein is Putative pterin-4-alpha-carbinolamine dehydratase.